The following is an 830-amino-acid chain: Leucine--tRNA ligase (830 aa).

A 'HIGH' region motif is present at residues 48–58 (PYPSGAIHMGH). The 'KMSKS' region signature appears at 596–600 (KMSKS). Lys599 contributes to the ATP binding site.

This sequence belongs to the class-I aminoacyl-tRNA synthetase family.

Its subcellular location is the cytoplasm. It carries out the reaction tRNA(Leu) + L-leucine + ATP = L-leucyl-tRNA(Leu) + AMP + diphosphate. The chain is Leucine--tRNA ligase from Helicobacter hepaticus (strain ATCC 51449 / 3B1).